Here is a 67-residue protein sequence, read N- to C-terminus: Protein SlyX homolog (67 aa).

The protein belongs to the SlyX family.

The polypeptide is Protein SlyX homolog (Mesorhizobium japonicum (strain LMG 29417 / CECT 9101 / MAFF 303099) (Mesorhizobium loti (strain MAFF 303099))).